The sequence spans 192 residues: UPF0301 protein Rru_A3059 (192 aa).

It belongs to the UPF0301 (AlgH) family.

The chain is UPF0301 protein Rru_A3059 from Rhodospirillum rubrum (strain ATCC 11170 / ATH 1.1.1 / DSM 467 / LMG 4362 / NCIMB 8255 / S1).